The chain runs to 598 residues: MRSSYAGQVSEKLMGQTVTLMGWAHRRRDHGGVIFIDLRDREGLVQIVCDPDRAEMFKTAEGVRNEFCLKIVGLVRARPSGTENANLVSGKVEVLCHELEVLNPSVTPPFQIDDENLSETTRLTHRVLDLRRPQMQKNLMLRYRVSMEVRKFLDANGFIDIETPMLTKSTPEGARDYLVPSRVNDGHFFALPQSPQLFKQLLMVAGFDRYYQITKCFRDEDLRADRQPEFTQIDIETSFLSEEEIRGMFEGMIRTVFRNTIGVDLPGYPVMTYADAMHKYGSDKPDLRVKLQFTELTDVMRDVDFKVFSAPAQSKNGRVVALRVPGGADMSRGEIDGYTEFVKIYGAKGLAWIKVNDVAKGREGMQSPIVKNLHDAAIAEIIARTGVCNGDLIFFGADKAKVVNDAIGALRVKVGHSDFGKKNGLFEDKWAPLWVVDFPMFEHDDEGDRWNAVHHPFTAPKDGHEDYMDTDPGKCIAKAYDMVLNGWELGGGSVRIHKAEVQSKVFSALKIGKEDAQVKFGFLLDALQYGAPPHGGLAFGLDRIVTMMTRAESIRDVIAFPKTQRAQCLLTGAPSLVDEKQLRELHIRLRNAGAAGNA.

Glu172 serves as a coordination point for L-aspartate. Residues 196–199 (QLFK) form an aspartate region. Arg218 is an L-aspartate binding site. ATP-binding positions include 218-220 (RDE) and Gln227. His454 is a binding site for L-aspartate. Glu488 serves as a coordination point for ATP. Arg495 contributes to the L-aspartate binding site. Residue 540–543 (GLDR) coordinates ATP.

This sequence belongs to the class-II aminoacyl-tRNA synthetase family. Type 1 subfamily. In terms of assembly, homodimer.

The protein localises to the cytoplasm. It carries out the reaction tRNA(Asx) + L-aspartate + ATP = L-aspartyl-tRNA(Asx) + AMP + diphosphate. Aspartyl-tRNA synthetase with relaxed tRNA specificity since it is able to aspartylate not only its cognate tRNA(Asp) but also tRNA(Asn). Reaction proceeds in two steps: L-aspartate is first activated by ATP to form Asp-AMP and then transferred to the acceptor end of tRNA(Asp/Asn). The polypeptide is Aspartate--tRNA(Asp/Asn) ligase (Leptothrix cholodnii (strain ATCC 51168 / LMG 8142 / SP-6) (Leptothrix discophora (strain SP-6))).